Here is a 330-residue protein sequence, read N- to C-terminus: Aspartate--ammonia ligase (330 aa).

The protein belongs to the class-II aminoacyl-tRNA synthetase family. AsnA subfamily.

It is found in the cytoplasm. It carries out the reaction L-aspartate + NH4(+) + ATP = L-asparagine + AMP + diphosphate + H(+). The protein operates within amino-acid biosynthesis; L-asparagine biosynthesis; L-asparagine from L-aspartate (ammonia route): step 1/1. This is Aspartate--ammonia ligase from Haemophilus influenzae (strain ATCC 51907 / DSM 11121 / KW20 / Rd).